Consider the following 337-residue polypeptide: DnaJ homolog dnj-2 (337 aa).

A helical transmembrane segment spans residues 4–24 (AIAAPILFLLVSFFVQECESV). A J domain is found at 36–105 (NCYDVLEVNR…EAKTNYDYYL (70 aa)). 2 helical membrane-spanning segments follow: residues 127–147 (VDLR…QFLS) and 222–242 (LAWH…WTAL). Residues 293 to 323 (LKRNCATWKAERDAAEQEKMAQSGRYKRYKR) are a coiled coil.

This sequence belongs to the DNAJC25 family.

The protein localises to the membrane. This chain is DnaJ homolog dnj-2 (dnj-2), found in Caenorhabditis elegans.